The primary structure comprises 578 residues: SCARECROW-LIKE protein 7 (578 aa).

Over residues 18–29 the composition is skewed to low complexity; it reads VIQQQQQQQQQQ. 2 disordered regions span residues 18 to 84 and 146 to 173; these read VIQQ…LAYG and PPPP…APRP. Basic residues predominate over residues 49–61; the sequence is PHHHQQKHHHHHQ. Low complexity predominate over residues 62–74; it reads QMPAMPQAPPSSH. A compositionally biased stretch (pro residues) spans 146-156; the sequence is PPPPVPSPPPT. Over residues 157–173 the composition is skewed to low complexity; sequence HAAATATATAATAAPRP. Residues 198-578 form the GRAS domain; the sequence is SADASCSAPI…RPLLTVSAWR (381 aa). The leucine repeat I (LRI) stretch occupies residues 205–264; it reads APILQSLLSCSRAAATDPGLAAAELASVRAAATDAGDPSERLAFYFADALSRRLACGTGA. Positions 283–349 are VHIID; it reads YKTLNDACPY…GKPTRIRITG (67 aa). Positions 314–318 match the VHIID motif; the sequence is IHIVD. Residues 365–397 are leucine repeat II (LRII); it reads ATNTRLRDFAKLLGVDFEFVPLLRPVHELNKSD. A PFYRE region spans residues 406-497; that stretch reads VAVNFMLQLY…RWMFGERIQR (92 aa). An LXXLL motif motif is present at residues 414 to 418; it reads LYHLL. Residues 500-578 are SAW; sequence GPEEGADRTE…RPLLTVSAWR (79 aa).

Belongs to the GRAS family. As to quaternary structure, homodimer.

It localises to the nucleus. Probable transcription factor involved in plant development. Involved in environmental abiotic stress resistance. May increase the expression of stress-responsive genes. Binds DNA in vitro. In Oryza sativa subsp. japonica (Rice), this protein is SCARECROW-LIKE protein 7.